The primary structure comprises 185 residues: Elongation factor P (185 aa).

It belongs to the elongation factor P family.

It localises to the cytoplasm. It functions in the pathway protein biosynthesis; polypeptide chain elongation. Its function is as follows. Involved in peptide bond synthesis. Stimulates efficient translation and peptide-bond synthesis on native or reconstituted 70S ribosomes in vitro. Probably functions indirectly by altering the affinity of the ribosome for aminoacyl-tRNA, thus increasing their reactivity as acceptors for peptidyl transferase. The protein is Elongation factor P of Thermosynechococcus vestitus (strain NIES-2133 / IAM M-273 / BP-1).